A 540-amino-acid chain; its full sequence is Probable ATP-dependent RNA helicase DDX28 (540 aa).

The Mitochondrial targeting signal signature appears at 3-18 (LTRPVRLFSLVTRLLL). Residues 126–156 (GSFADLGLEPRVLHALQEAAPEVVQPTTVQS) carry the Q motif motif. Positions 159 to 351 (IPSLLRGRHV…NKVASPDAVT (193 aa)) constitute a Helicase ATP-binding domain. Position 172-179 (172-179 (AETGSGKT)) interacts with ATP. Positions 180 to 191 (LSYLLPLLQRLL) match the Nuclear export signal motif. The DEAD motif lies at 286–289 (DEAD). In terms of domain architecture, Helicase C-terminal spans 377–536 (KVAELVHILK…GLASSVKEPL (160 aa)). Positions 520–523 (RRRR) match the Nuclear localization signal motif.

The protein belongs to the DEAD box helicase family. Monomer. Found in a complex with GRSF1, DHX30, FASTKD2 and FASTKD5. Associates with the 16S mitochondrial rRNA (16S mt-rRNA) and with the mitochondrial ribosome large subunit (39S). As to expression, expressed in all tissues tested, including brain, placenta, lung, liver, skeletal muscle, kidney, pancreas, leukocytes, colon, small intestine, ovary and prostate.

It is found in the nucleus. Its subcellular location is the mitochondrion. It localises to the mitochondrion matrix. The protein resides in the mitochondrion nucleoid. The enzyme catalyses ATP + H2O = ADP + phosphate + H(+). Its function is as follows. Plays an essential role in facilitating the proper assembly of the mitochondrial large ribosomal subunit and its helicase activity is essential for this function. May be involved in RNA processing or transport. Has RNA and Mg(2+)-dependent ATPase activity. This is Probable ATP-dependent RNA helicase DDX28 (DDX28) from Homo sapiens (Human).